We begin with the raw amino-acid sequence, 193 residues long: dCTP deaminase (193 aa).

DCTP is bound by residues 110-115, Asp-128, 136-138, Tyr-171, Lys-178, and Gln-182; these read RSSLAR and VLE. Catalysis depends on Glu-138, which acts as the Proton donor/acceptor.

The protein belongs to the dCTP deaminase family. In terms of assembly, homotrimer.

It catalyses the reaction dCTP + H2O + H(+) = dUTP + NH4(+). It participates in pyrimidine metabolism; dUMP biosynthesis; dUMP from dCTP (dUTP route): step 1/2. In terms of biological role, catalyzes the deamination of dCTP to dUTP. This is dCTP deaminase from Buchnera aphidicola subsp. Baizongia pistaciae (strain Bp).